The sequence spans 368 residues: Peptide chain release factor 2 (368 aa).

Q248 carries the N5-methylglutamine modification.

This sequence belongs to the prokaryotic/mitochondrial release factor family. Post-translationally, methylated by PrmC. Methylation increases the termination efficiency of RF2.

Its subcellular location is the cytoplasm. Its function is as follows. Peptide chain release factor 2 directs the termination of translation in response to the peptide chain termination codons UGA and UAA. This chain is Peptide chain release factor 2, found in Corynebacterium glutamicum (strain R).